Here is a 167-residue protein sequence, read N- to C-terminus: Mitochondrial fission 1 protein B (167 aa).

The stretch at 92-125 is one TPR repeat; the sequence is REKLYLLALGYYRSGDFSRSRDCIERCLEVEPES. The helical transmembrane segment at 144–164 threads the bilayer; that stretch reads VIGVGIAVTAVGVVAGIAAAI.

It belongs to the FIS1 family. In terms of assembly, interacts with PEX11A, PEX11B, PEX11C, PEX11D and PEX11E.

It localises to the mitochondrion outer membrane. Its subcellular location is the peroxisome membrane. Its function is as follows. Component of the peroxisomal and mitochondrial division machineries. Plays a role in promoting the fission of mitochondria and peroxisomes. In association with PEX11C, PEX11D, PEX11E and DRP3A, is involved in cell cycle-associated constitutive self-replication of preexisting peroxisomes. The sequence is that of Mitochondrial fission 1 protein B (FIS1B) from Arabidopsis thaliana (Mouse-ear cress).